A 375-amino-acid polypeptide reads, in one-letter code: MNIKSLLLGSAAALVAASGAQAADAIVAPEPEAVEYVRVCDAYGAGYFYIPGTETCLRVHGYVRYDVKGGDDVYSGTDRKGWDKSARFALRVSTGSETELGTLKTFTELRFNYSASNSREDGYYGTNSDGTVMQFAYIQLGGLRVGIDESEFQTFTGYLGDVINDDVISAGTYRTGKISYTFTGGNGFSAVIALEQGGDNDGGYTPVFKDSQGREINGRGYQIDGYMPDVVGGLKYAGGWGSIAGVVAYDSVIEEWATKVRGDVNITDQFSVWLQGAYSSAATPDQNYGQWGGDWAVWGGLKYQATQKAAFNLQAAHDDWGKTAVTANVAYELVPGFTITPEVSYTKFSNEWKRELGNDTLDDAWGGIVRFQRSF.

The first 22 residues, methionine 1–alanine 22, serve as a signal peptide directing secretion.

The protein belongs to the alphaproteobacteria porin family. Homotrimer.

It localises to the cell outer membrane. In terms of biological role, forms passive diffusion pores that allow small molecular weight hydrophilic materials across the outer membrane. The polypeptide is Porin Omp2b (omp2b) (Brucella suis).